The sequence spans 276 residues: Large ribosomal subunit protein uL2 (276 aa).

Residues 225 to 276 form a disordered region; it reads MNPVDHPHGGGEGRAPVGRKHPVTPWGKPAMGAKTRKKRKLSDKLIVKPRNK. Residues 258–276 show a composition bias toward basic residues; sequence KTRKKRKLSDKLIVKPRNK.

Belongs to the universal ribosomal protein uL2 family. In terms of assembly, part of the 50S ribosomal subunit. Forms a bridge to the 30S subunit in the 70S ribosome.

Functionally, one of the primary rRNA binding proteins. Required for association of the 30S and 50S subunits to form the 70S ribosome, for tRNA binding and peptide bond formation. It has been suggested to have peptidyltransferase activity; this is somewhat controversial. Makes several contacts with the 16S rRNA in the 70S ribosome. This Moorella thermoacetica (strain ATCC 39073 / JCM 9320) protein is Large ribosomal subunit protein uL2.